Here is a 517-residue protein sequence, read N- to C-terminus: Cytochrome P450 monooxygenase sdnE (517 aa).

A helical membrane pass occupies residues 4–24 (SSILQTLAVLYVLYLLGLIIY). N-linked (GlcNAc...) asparagine glycosylation is present at N111. A helical transmembrane segment spans residues 219-239 (FPVVFIILGLSPRAMLKLVVP). C456 contributes to the heme binding site.

It belongs to the cytochrome P450 family. It depends on heme as a cofactor.

It is found in the membrane. Its pathway is antibiotic biosynthesis. Cytochrome P450 monooxygenase; part of the gene cluster that mediates the biosynthesis of sordarin and hypoxysordarin, glycoside antibiotics with a unique tetracyclic diterpene aglycone structure. First, the geranylgeranyl diphosphate synthase sdnC constructs GGDP from farnesyl diphosphate and isopentenyl diphosphate. The diterpene cyclase sdnA then catalyzes the cyclization of GGDP to afford cycloaraneosene. Cycloaraneosene is then hydroxylated four times by the putative cytochrome P450 monooxygenases sdnB, sdnE, sdnF and sdnH to give a hydroxylated cycloaraneosene derivative such as cycloaraneosene-8,9,13,19-tetraol. Although the order of the hydroxylations is unclear, at least C8, C9 and C13 of the cycloaraneosene skeleton are hydroxylated before the sordaricin formation. Dehydration of the 13-hydroxy group of the hydroxylated cycloaraneosene derivative might be catalyzed by an unassigned hypothetical protein such as sdnG and sdnP to construct the cyclopentadiene moiety. The FAD-dependent oxidoreductase sdnN is proposed to catalyze the oxidation at C9 of the hydroxylated cycloaraneosene derivative and also catalyze the Baeyer-Villiger oxidation to give the lactone intermediate. The presumed lactone intermediate would be hydrolyzed to give an acrolein moiety and a carboxylate moiety. Then, [4+2]cycloaddition would occur between the acrolein moiety and the cyclopentadiene moiety to give sordaricin. SdnN might also be involved in the [4+2]cycloaddition after the hypothesized oxidation to accommodate the oxidized product and prompt the [4+2]cycloaddition. GDP-6-deoxy-D-altrose may be biosynthesized from GDP-D-mannose by the putative GDP-mannose-4,6-dehydratase sdnI and the short-chain dehydrogenase sdnK. The glycosyltransferase sdnJ catalyzes the attachment of 6-deoxy-D-altrose onto the 19-hydroxy group of sordaricin to give 4'-O-demethylsordarin. The methyltransferase sdnD would complete the biosynthesis of sordarin. Sordarin can be further modified into hypoxysordarin. The unique acyl chain at the 3'-hydroxy group of hypoxysordarin would be constructed by an iterative type I PKS sdnO and the trans-acting polyketide methyltransferase sdnL. SdnL would be responsible for the introduction of an alpha-methyl group of the polyketide chain. Alternatively, the beta-lactamase-like protein sdnR might be responsible for the cleavage and transfer of the polyketide chain from the PKS sdnO to sordarin. Two putative cytochrome P450 monooxygenases, sdnQ and sdnT, might catalyze the epoxidations of the polyketide chain to complete the biosynthesis of hypoxysordarin. Transcriptional regulators sdnM and sdnS are presumably encoded for the transcriptional regulation of the expression of the sdn gene cluster. This chain is Cytochrome P450 monooxygenase sdnE, found in Sordaria araneosa (Pleurage araneosa).